Reading from the N-terminus, the 786-residue chain is LPS-assembly protein LptD (786 aa).

An N-terminal signal peptide occupies residues 1–24; the sequence is MKKRIPTLLATMIASALYSHQGLA. Intrachain disulfides connect cysteine 31-cysteine 726 and cysteine 173-cysteine 727.

The protein belongs to the LptD family. Component of the lipopolysaccharide transport and assembly complex. Interacts with LptE and LptA. In terms of processing, contains two intramolecular disulfide bonds.

It is found in the cell outer membrane. In terms of biological role, together with LptE, is involved in the assembly of lipopolysaccharide (LPS) at the surface of the outer membrane. The sequence is that of LPS-assembly protein LptD from Salmonella typhimurium (strain LT2 / SGSC1412 / ATCC 700720).